Reading from the N-terminus, the 95-residue chain is uncharacterized protein (95 aa).

This is an uncharacterized protein from Methanocaldococcus jannaschii (strain ATCC 43067 / DSM 2661 / JAL-1 / JCM 10045 / NBRC 100440) (Methanococcus jannaschii).